Here is a 339-residue protein sequence, read N- to C-terminus: MLELFFEYIFPLIIIALKVVAITIPLILCVAYLTYAERRVIGLMQLRRGPNVVGPFGLLQPIADAVKLLFKEPIIPTNSDKILFILAPMITFILSLIGWAVIPFAKGVVLADINVGVLYILAISSLSVYGIIIAGWASNSKYAFLGAIRSSAQMISYEVSMGLVIITVLLTTGTLNLSEIIEVQRTMPWWIDLMLLPMGVVFFISVLAETNRLPFDLPEAESELVAGYNVEYSSMGFALFFLGEYANMILVSAMTTTFFLGGYLPPFNISWLDCIPGFFWFVFKVGFLLFCFLWIRATLPRYRYDQLMRLGWKVFLPLTLFWVVLVSSVLVYTDNLPSI.

A run of 9 helical transmembrane segments spans residues isoleucine 9 to cysteine 29, proline 50 to phenylalanine 70, isoleucine 82 to isoleucine 102, valine 115 to glycine 135, methionine 161 to isoleucine 181, methionine 187 to leucine 207, methionine 235 to threonine 255, isoleucine 275 to isoleucine 295, and glycine 311 to valine 331.

The protein belongs to the complex I subunit 1 family. As to quaternary structure, NDH-1 is composed of 14 different subunits. Subunits NuoA, H, J, K, L, M, N constitute the membrane sector of the complex.

The protein resides in the cell membrane. It catalyses the reaction a quinone + NADH + 5 H(+)(in) = a quinol + NAD(+) + 4 H(+)(out). Its function is as follows. NDH-1 shuttles electrons from NADH, via FMN and iron-sulfur (Fe-S) centers, to quinones in the respiratory chain. The immediate electron acceptor for the enzyme in this species is believed to be ubiquinone. Couples the redox reaction to proton translocation (for every two electrons transferred, four hydrogen ions are translocated across the cytoplasmic membrane), and thus conserves the redox energy in a proton gradient. This subunit may bind ubiquinone. This chain is NADH-quinone oxidoreductase subunit H, found in Rickettsia africae (strain ESF-5).